Reading from the N-terminus, the 142-residue chain is Pro-Viral epidermal growth factor (142 aa).

A signal peptide spans 1–19; that stretch reads MSIKYLMLLFAAMIIRSLA. At 20–104 the chain is on the extracellular side; sequence DSGNAIETTS…DTTTSYIPSL (85 aa). Asparagine 34 is a glycosylation site (N-linked (GlcNAc...) asparagine; by host). Cysteine 71 and cysteine 80 are joined by a disulfide. Residues 105–125 form a helical membrane-spanning segment; it reads GIVLVLVGIIITCCLLSVYMF. The Cytoplasmic portion of the chain corresponds to 126–142; the sequence is TRRTKLPIQDMVVLYFL.

The protein belongs to the orthopoxvirus OPG019 family. Interacts with host EGFR. In terms of processing, cleaved at the cell surface by host ADAM10, thereby releasing the secreted form of VGF.

The protein localises to the host membrane. It localises to the secreted. Stimulates cellular proliferation (hyperplasia)and mobility around infected cells to promote rapid and efficient spread of infection. This effect is beneficial for virus replication in vivo, because poxviruses replicate possibly better in proliferating cells than in quiescent cells. Acts by binding host EGFR, inducing its dimerization, autophosphorylation and leading to activation of several cellular pathways regulating cell proliferation or cell survival. The activation by host EGFR of mitogen activated protein kinases (MAPK) and extracellular-signal regulated kinases (ERK) are essential for the positive effect of vaccinia growth factor on poxvirus virulence in vivo. The protein is Pro-Viral epidermal growth factor (OPG019) of Cynomys gunnisoni (Gunnison's prairie dog).